We begin with the raw amino-acid sequence, 381 residues long: MARRPVFQEVTETTPPGTTPSGGMIDAGHKGARGAIRLWLVVLFVMVAAMIALGGATRLTGSGLSITEWKPVTGAIPPMDAATWQAEFDKYRQIPQFELVNSDMDLASFKRIYWWEWSHRLLGRLVGLVWAAGFVFFLATRRIPTGWTPRLLLLGALGGAQGAIGWWMVHSGLSGEMVRVASYRLATHLGLAFAILGLIAWYVLALSRSEAALLRARRAGEAKLFSMTTGLMHLAFVQILLGALVAGIDAGRMYTGWPTMGGEWIPAEIWDATLGWRNFFENPALVQFIHRMTGYLLAVFAVVVFLRARRSPHPVTRGAYVAMLVALAVQVALGIMNVLHASPLPLALAHQIGAVALFTLILRARHHARYPYETSVRGTVR.

A disordered region spans residues 1-23 (MARRPVFQEVTETTPPGTTPSGG). A compositionally biased stretch (low complexity) spans 11-23 (TETTPPGTTPSGG). 8 helical membrane-spanning segments follow: residues 34–54 (GAIR…IALG), 120–140 (RLLG…FLAT), 151–171 (LLLL…MVHS), 185–205 (LATH…YVLA), 228–248 (TTGL…VAGI), 285–305 (LVQF…VVVF), 319–339 (AYVA…MNVL), and 342–362 (SPLP…TLIL). A heme-binding site is contributed by histidine 290. A heme-binding site is contributed by histidine 350.

This sequence belongs to the COX15/CtaA family. Type 2 subfamily. Interacts with CtaB. Heme b is required as a cofactor.

The protein resides in the cell membrane. The enzyme catalyses Fe(II)-heme o + 2 A + H2O = Fe(II)-heme a + 2 AH2. The protein operates within porphyrin-containing compound metabolism; heme A biosynthesis; heme A from heme O: step 1/1. Its function is as follows. Catalyzes the conversion of heme O to heme A by two successive hydroxylations of the methyl group at C8. The first hydroxylation forms heme I, the second hydroxylation results in an unstable dihydroxymethyl group, which spontaneously dehydrates, resulting in the formyl group of heme A. The chain is Heme A synthase from Paracoccus denitrificans (strain Pd 1222).